The sequence spans 769 residues: MKNLIKKFTIAVIVLSILYISYTTYISMNGIIIGTKIHKNDKSQFMIEEISESSYGQFVGLRQGDIILKINKEKPSDKHLKWGYLSHINSLDILRSGKKIHLKDFDLVTLNRPYSFFLFVLPLFFYFLSIICIFYILKVNKKRRSFAAYILILLLLDISIAYISAGGPFRGHIINRYINLFTFISSPILYLQFIQRYLGEIGKTFLNRISFLYIIPIFNLGIEFFQDYLQVDIDFLATLNLVSFATLTLFSFSAIYLHLNKYKYAEHSFILKLLILTNTLSFAPFLIFFVLPIIFTGNYIFPALASASLLVLIPFGLVYQFVANKMFDIEFILGRMRYYALLAMIPTLLIVGALVLFDVMDIQMNPVRQTVFFFVVMFAVFYFKEVMDFKFRLKRFSEKFNYQDSIFKYTQLMRGVTSLQQVFKELKNTILDVLLVSKAYTFEVTPDHKVIFLDKHEVGPDWNFYQEEFENVTSEIGKIIEVNQGFLMKVGERGGSSYVLLCLSNINTPRLTRDEISWLKTLSFYTSVSMENVLHIEELMEHLKDLKQEGTNPIWLKKLMFAIEEKQRSGLARDLHDSVLQDLISLKRQCELFLGDFKKDDNPCREEVQDKLVQMNEQMSDVISMTRETCHELRPQLLYDLGLVKALSKLVAQQQERVPFHIRLNTGRFTASLDLDSQLNLYRIIQEFLSNAVKHSQATDVLIMLISIQNKIVLHYEDDGVGFDQEKNTEHSMSMGLSGIKERVRALDGRLRIETSEGKGFKADIEIEL.

The Cytoplasmic segment spans residues 1-9 (MKNLIKKFT). The chain crosses the membrane as a helical span at residues 10 to 33 (IAVIVLSILYISYTTYISMNGIII). Residues 34-113 (GTKIHKNDKS…DFDLVTLNRP (80 aa)) are Extracellular-facing. The chain crosses the membrane as a helical span at residues 114–134 (YSFFLFVLPLFFYFLSIICIF). At 135–144 (YILKVNKKRR) the chain is on the cytoplasmic side. The helical transmembrane segment at 145–167 (SFAAYILILLLLDISIAYISAGG) threads the bilayer. Residues 168–235 (PFRGHIINRY…QDYLQVDIDF (68 aa)) are Extracellular-facing. A helical membrane pass occupies residues 236–257 (LATLNLVSFATLTLFSFSAIYL). Residues 258-272 (HLNKYKYAEHSFILK) lie on the Cytoplasmic side of the membrane. A helical transmembrane segment spans residues 273 to 295 (LLILTNTLSFAPFLIFFVLPIIF). Over 296 to 299 (TGNY) the chain is Extracellular. Residues 300 to 323 (IFPALASASLLVLIPFGLVYQFVA) form a helical membrane-spanning segment. The Cytoplasmic segment spans residues 324–337 (NKMFDIEFILGRMR). A helical membrane pass occupies residues 338 to 357 (YYALLAMIPTLLIVGALVLF). Over 358–361 (DVMD) the chain is Extracellular. Residues 362-383 (IQMNPVRQTVFFFVVMFAVFYF) traverse the membrane as a helical segment. The Cytoplasmic portion of the chain corresponds to 384-769 (KEVMDFKFRL…GFKADIEIEL (386 aa)). The region spanning 571–769 (LARDLHDSVL…GFKADIEIEL (199 aa)) is the Histidine kinase domain. The residue at position 576 (His-576) is a Phosphohistidine; by autocatalysis.

In terms of processing, autophosphorylates on a histidine and transfers the phosphate group onto an aspartate in ComA, thus activating it.

The protein localises to the cell membrane. It carries out the reaction ATP + protein L-histidine = ADP + protein N-phospho-L-histidine.. Sensor in the two-component regulatory system ComP/ComA involved in a major quorum response pathway that regulates the development of genetic competence. Plays a role in sporulation, at least partly interchangeable with that of SpoIIJ. Probably activates ComA by phosphorylation. This is Sensor histidine kinase ComP (comP) from Bacillus subtilis (strain 168).